A 292-amino-acid polypeptide reads, in one-letter code: Ribosomal protein L11 methyltransferase (292 aa).

S-adenosyl-L-methionine-binding residues include Thr144, Gly165, Asp187, and Asn229.

This sequence belongs to the methyltransferase superfamily. PrmA family.

It localises to the cytoplasm. It catalyses the reaction L-lysyl-[protein] + 3 S-adenosyl-L-methionine = N(6),N(6),N(6)-trimethyl-L-lysyl-[protein] + 3 S-adenosyl-L-homocysteine + 3 H(+). Functionally, methylates ribosomal protein L11. This is Ribosomal protein L11 methyltransferase from Ectopseudomonas mendocina (strain ymp) (Pseudomonas mendocina).